Reading from the N-terminus, the 406-residue chain is N-acetylmuramoyl-L-alanine amidase CwlM (406 aa).

2 peptidoglycan-binding domain regions span residues 18 to 83 and 105 to 160; these read SAAV…YRAL and GDDV…LRSL. Residues 193–370 form the MurNAc-LAA domain; sequence IIIDPGRGGV…IAEGILAAVK (178 aa).

Belongs to the N-acetylmuramoyl-L-alanine amidase 3 family.

Its subcellular location is the periplasm. It catalyses the reaction Hydrolyzes the link between N-acetylmuramoyl residues and L-amino acid residues in certain cell-wall glycopeptides.. It participates in cell wall degradation; peptidoglycan degradation. In terms of biological role, cell-wall hydrolase that hydrolyzes the amide bond between N-acetylmuramic acid and L-alanine in cell-wall glycopeptides. Is able to lyse whole mycobacteria, release peptidoglycan from the cell wall of M.luteus and M.smegmatis, and cleave N-acetylmuramoyl-L-alanyl-D-isoglutamine, releasing free N-acetylmuramic acid and dipeptide. The polypeptide is N-acetylmuramoyl-L-alanine amidase CwlM (Mycobacterium tuberculosis (strain ATCC 25618 / H37Rv)).